The chain runs to 305 residues: Tyrosine recombinase XerD (305 aa).

Positions 2–87 constitute a Core-binding (CB) domain; it reads SQGEAWADAF…AVRQFYRFVL (86 aa). A Tyr recombinase domain is found at 108–295; that stretch reads PLPKVLERDE…AGEHLAHIVQ (188 aa). Catalysis depends on residues arginine 149, lysine 173, histidine 247, arginine 250, and histidine 273. The O-(3'-phospho-DNA)-tyrosine intermediate role is filled by tyrosine 282.

This sequence belongs to the 'phage' integrase family. XerD subfamily. In terms of assembly, forms a cyclic heterotetrameric complex composed of two molecules of XerC and two molecules of XerD.

Its subcellular location is the cytoplasm. In terms of biological role, site-specific tyrosine recombinase, which acts by catalyzing the cutting and rejoining of the recombining DNA molecules. The XerC-XerD complex is essential to convert dimers of the bacterial chromosome into monomers to permit their segregation at cell division. It also contributes to the segregational stability of plasmids. This Caulobacter vibrioides (strain ATCC 19089 / CIP 103742 / CB 15) (Caulobacter crescentus) protein is Tyrosine recombinase XerD.